Here is a 256-residue protein sequence, read N- to C-terminus: MYSTKYRRGFLANQGRGYPRHSTGKRSRNVSRIDFKRRSSKYVHGNDDSKMANQRIHENQFGPEFVMVHNTAISTFITFPSLGKTEPSRSRSYIKLKRLRFKGTVKIERVHVDLSMDGPSPKIEGVFSLVVVVDRQPHLSPTGCLHTFDELFGARIHSHGNLAVSSALKDRFYIRHVFKRVISVEKDSTMIDLEGMTSFTNRRFNCWSAFKDFDRQACNGVYGNISKNAILVYYCWMSDIVSKASTFVSFDLDYVG.

The Bipartite nuclear localization signal motif lies at 21–42 (HSTGKRSRNVSRIDFKRRSSKY). The short motif at 81-96 (SLGKTEPSRSRSYIKL) is the Nuclear localization signal element. The interval 150–187 (ELFGARIHSHGNLAVSSALKDRFYIRHVFKRVISVEKD) is interaction with Arabidopsis thaliana NSI protein.

It belongs to the begomovirus nuclear shuttle protein family. As to quaternary structure, binds to single-stranded and double-stranded viral DNA. Interacts with the host nuclear shuttle interacting (NSI) protein. This interaction may allow NSP to recruit NSI monomers to the viral genome and thus regulate nuclear export of viral genome by NSP.

The protein resides in the host nucleus. It localises to the host cytoplasm. It is found in the host cell membrane. Functionally, binds to the genomic viral ssDNA, shuttles it into and out of the cell nucleus. Begomoviruses use 2 proteins to transport their DNA from cell to cell. The nuclear shuttle protein (NSP) shuttles it between nucleus and cytoplasm and the movement protein (MP) probably transports the DNA-NSP complex to the cell periphery and facilitates movement across the cell wall. This is Nuclear shuttle protein from Solanum lycopersicum (Tomato).